A 458-amino-acid chain; its full sequence is Morphogenetic regulator of filamentous growth protein 1 (458 aa).

The disordered stretch occupies residues 401-458 (KKDSGSEPLHAKRRRNSGISPRTTTLGPNGNSNTSNEELPTSDVNDINKDMTKKKMKF). Residues 417-445 (SGISPRTTTLGPNGNSNTSNEELPTSDVN) are compositionally biased toward polar residues. The span at 446–458 (DINKDMTKKKMKF) shows a compositional bias: basic and acidic residues.

It belongs to the MFG1 family. Interacts with FLO8 and MSS11, both morphogenetic transcription factors binding directly to the FLO11 promoter.

It is found in the nucleus. Functionally, transcriptional regulator with a general role in all morphogenetically distinct forms of filamentous growth, namely haploid invasive growth, biofilm formation, and diploid pseudohyphal growth. May control FLO11 gene expression as part of a promoter-bound complex with FLO8 and MSS1. This Saccharomyces cerevisiae (strain ATCC 204508 / S288c) (Baker's yeast) protein is Morphogenetic regulator of filamentous growth protein 1 (MFG1).